We begin with the raw amino-acid sequence, 343 residues long: MPINCKAKCGKAAALKRPKTGDALCKECFFAAFEAEIHHTITSSKLFRRGEKVAVAASGGKDSTVLAHVMKLLNERHDYGLELVLLSIDEGITGYRDDSLETVKQNRDDYKMPLKILSYEELYGWTMDRIVSQIGRSNNCTFCGVFRRQALDRGAKLLCVDSIATGHNADDIAETVLMNVLRGDTARLRRCTDIRTGGGEDSIPRVKPLKYSYEKEIVMYAHYKKLVYFSTECVFAPNAYRGHARAFLKDLEKVRPSVIMDIIYSGEQLRFKDTAKNPVRGTCNRCGFISSQQPCKACVLLEGLNRGLPKLGIGKKSKGDRMIAKQDQELALRERANLVKNDF.

Belongs to the TtcA family. CTU1/NCS6/ATPBD3 subfamily.

The protein localises to the cytoplasm. It functions in the pathway tRNA modification; 5-methoxycarbonylmethyl-2-thiouridine-tRNA biosynthesis. Functionally, plays a central role in 2-thiolation of mcm(5)S(2)U at tRNA wobble positions of tRNA(Lys), tRNA(Glu) and tRNA(Gln). Directly binds tRNAs and probably acts by catalyzing adenylation of tRNAs, an intermediate required for 2-thiolation. It is unclear whether it acts as a sulfurtransferase that transfers sulfur from thiocarboxylated URM1 onto the uridine of tRNAs at wobble position. This is Cytoplasmic tRNA 2-thiolation protein 1 from Drosophila pseudoobscura pseudoobscura (Fruit fly).